We begin with the raw amino-acid sequence, 148 residues long: UPF0756 membrane protein NMC1845 (148 aa).

The next 4 helical transmembrane spans lie at 13 to 35, 50 to 70, 80 to 100, and 121 to 141; these read LILL…LLLM, HGLN…LVSG, FLNF…WLAG, and VIGV…AGIL.

Belongs to the UPF0756 family.

It localises to the cell membrane. This chain is UPF0756 membrane protein NMC1845, found in Neisseria meningitidis serogroup C / serotype 2a (strain ATCC 700532 / DSM 15464 / FAM18).